We begin with the raw amino-acid sequence, 1175 residues long: 1-phosphatidylinositol 4,5-bisphosphate phosphodiesterase beta-4 (1175 aa).

Ala2 is subject to N-acetylalanine. In terms of domain architecture, PI-PLC X-box spans 313 to 463 (QEMDHPLAHY…LKRKILIKNK (151 aa)). Active-site residues include His328 and His375. Residues 487-512 (AAPASILEDDNEEEIESADQEEEAHP) form a disordered region. Over residues 493-508 (LEDDNEEEIESADQEE) the composition is skewed to acidic residues. Positions 565 to 681 (LSTMINYAQP…GYLLKPDFMR (117 aa)) constitute a PI-PLC Y-box domain. Residues 684-809 (DRTFDPFSET…SLRNEGNKPL (126 aa)) enclose the C2 domain. 2 disordered regions span residues 860-904 (SDIA…LGSG) and 1082-1110 (KISMENSKAISQDKSIKNKAERERRVREL). Composition is skewed to polar residues over residues 885–900 (VTPQSSSELRPTTTAA) and 1085–1094 (MENSKAISQD). A Phosphothreonine modification is found at Thr886. Positions 1095–1109 (KSIKNKAERERRVRE) are enriched in basic and acidic residues.

Requires Ca(2+) as cofactor. As to expression, preferentially expressed in the retina.

The protein localises to the cell membrane. The enzyme catalyses a 1,2-diacyl-sn-glycero-3-phospho-(1D-myo-inositol-4,5-bisphosphate) + H2O = 1D-myo-inositol 1,4,5-trisphosphate + a 1,2-diacyl-sn-glycerol + H(+). It carries out the reaction a 1,2-diacyl-sn-glycero-3-phospho-(1D-myo-inositol) + H2O = 1D-myo-inositol 1-phosphate + a 1,2-diacyl-sn-glycerol + H(+). Functionally, activated phosphatidylinositol-specific phospholipase C enzymes catalyze the production of the second messenger molecules diacylglycerol (DAG) and inositol 1,4,5-trisphosphate (IP3) involved in G-protein coupled receptor signaling pathways. PLCB4 is a direct effector of the endothelin receptor signaling pathway that plays an essential role in lower jaw and middle ear structures development. The protein is 1-phosphatidylinositol 4,5-bisphosphate phosphodiesterase beta-4 of Rattus norvegicus (Rat).